The following is a 192-amino-acid chain: UPF0312 protein YPK_1931 (192 aa).

The N-terminal stretch at 1 to 23 (MINKTLLGLSLGALMFTAGSAVA) is a signal peptide.

This sequence belongs to the UPF0312 family. Type 1 subfamily.

Its subcellular location is the periplasm. The polypeptide is UPF0312 protein YPK_1931 (Yersinia pseudotuberculosis serotype O:3 (strain YPIII)).